The chain runs to 385 residues: Trehalose-phosphate phosphatase A (385 aa).

Residues 1–21 (MDMKSGHSSPVMTDSPPISNS) are disordered.

Belongs to the trehalose phosphatase family. The cofactor is a divalent metal cation. Expressed in flowers.

It catalyses the reaction alpha,alpha-trehalose 6-phosphate + H2O = alpha,alpha-trehalose + phosphate. The protein operates within glycan biosynthesis; trehalose biosynthesis. Removes the phosphate from trehalose 6-phosphate to produce free trehalose. Trehalose accumulation in plant may improve abiotic stress tolerance. The chain is Trehalose-phosphate phosphatase A (TPPA) from Arabidopsis thaliana (Mouse-ear cress).